Here is an 895-residue protein sequence, read N- to C-terminus: ABC-transporter-regulating transcription factor (895 aa).

The segment at residues C69–C96 is a DNA-binding region (zn(2)-C6 fungal-type). Residues H156–G218 are disordered. Residues S158–E207 are compositionally biased toward polar residues. A helical membrane pass occupies residues C648–L668. Residues E726–N813 are disordered. Positions P755–S765 are enriched in low complexity.

Interacts with ncaA.

It localises to the nucleus. Its subcellular location is the membrane. Functionally, transcription factor that regulates expression of the genes related to ergosterol biosynthesis, including erg3B, erg24A, erg25A, as well as cyp51A that encodes a target protein of azoles. In coordination with ffmA and ncaA, is responsible for the expression of the ABC transporter abcC/cdr1B/abcG1 related to azole resistance. Directly binds both the cyp51A and abcC/cdr1B/abcG1 promoters at a conserved 34 bp region called the atrR response element (ATRE). AtrR also binds to the promoter regions of both the sterol response transcription factor srbA and atrR genes themselves, the latter suggesting the possibility that atrR is autoregulated. Also regulates iron uptake, most likely via cooperation with SrbA. AtrR is necessary for hypoxia adaptation and virulence. In Aspergillus fumigatus (strain ATCC MYA-4609 / CBS 101355 / FGSC A1100 / Af293) (Neosartorya fumigata), this protein is ABC-transporter-regulating transcription factor.